Reading from the N-terminus, the 146-residue chain is Catabolic 3-dehydroquinase (146 aa).

The active-site Proton acceptor is the Y24. 3 residues coordinate substrate: N78, H84, and D91. The Proton donor role is filled by H104. Substrate contacts are provided by residues 105 to 106 (IT) and R115.

The protein belongs to the type-II 3-dehydroquinase family. Homododecamer. Adopts a ring-like structure, composed of an arrangement of two hexameric rings stacked on top of one another.

It catalyses the reaction 3-dehydroquinate = 3-dehydroshikimate + H2O. The protein operates within aromatic compound metabolism; 3,4-dihydroxybenzoate biosynthesis; 3,4-dihydroxybenzoate from 3-dehydroquinate: step 1/2. Is involved in the catabolism of quinate. Allows the utilization of quinate as carbon source via the beta-ketoadipate pathway. This chain is Catabolic 3-dehydroquinase, found in Candida albicans (strain SC5314 / ATCC MYA-2876) (Yeast).